The following is a 583-amino-acid chain: uncharacterized protein (583 aa).

Residues 162–424 enclose the FAD-binding FR-type domain; the sequence is YGIFAAPILD…RGVQQNPFAK (263 aa).

Belongs to the flavoprotein pyridine nucleotide cytochrome reductase family. It depends on FAD as a cofactor.

It is found in the mitochondrion. This is an uncharacterized protein from Schizosaccharomyces pombe (strain 972 / ATCC 24843) (Fission yeast).